Reading from the N-terminus, the 269-residue chain is UPF0494 membrane protein C1348.01 (269 aa).

The next 4 membrane-spanning stretches (helical) occupy residues 107–127, 144–164, 177–197, and 201–221; these read WPLL…KFEV, IWVP…SLIF, GVII…IAAL, and ITGL…LSLG.

The protein belongs to the UPF0494 family.

The protein localises to the vacuole membrane. The polypeptide is UPF0494 membrane protein C1348.01 (Schizosaccharomyces pombe (strain 972 / ATCC 24843) (Fission yeast)).